A 152-amino-acid polypeptide reads, in one-letter code: SsrA-binding protein (152 aa).

It belongs to the SmpB family.

The protein resides in the cytoplasm. In terms of biological role, required for rescue of stalled ribosomes mediated by trans-translation. Binds to transfer-messenger RNA (tmRNA), required for stable association of tmRNA with ribosomes. tmRNA and SmpB together mimic tRNA shape, replacing the anticodon stem-loop with SmpB. tmRNA is encoded by the ssrA gene; the 2 termini fold to resemble tRNA(Ala) and it encodes a 'tag peptide', a short internal open reading frame. During trans-translation Ala-aminoacylated tmRNA acts like a tRNA, entering the A-site of stalled ribosomes, displacing the stalled mRNA. The ribosome then switches to translate the ORF on the tmRNA; the nascent peptide is terminated with the 'tag peptide' encoded by the tmRNA and targeted for degradation. The ribosome is freed to recommence translation, which seems to be the essential function of trans-translation. The protein is SsrA-binding protein of Rickettsia massiliae (strain Mtu5).